The chain runs to 711 residues: DNA topoisomerase 3 (711 aa).

Positions 2-135 constitute a Toprim domain; it reads KSLILAEKPS…IKRLWISSVT (134 aa). 2 residues coordinate Mg(2+): E8 and D104. A Topo IA-type catalytic domain is found at 152 to 580; sequence FQHLYEAALA…EMKAFTQSIV (429 aa). An interaction with DNA region spans residues 186–191; the sequence is SLGRVQ. Catalysis depends on Y305, which acts as the O-(5'-phospho-DNA)-tyrosine intermediate. Positions 672–699 are disordered; the sequence is KRFKNKSSGKVSKKEMKKYMNNEDSLEN. The span at 683–692 shows a compositional bias: basic and acidic residues; the sequence is SKKEMKKYMN.

It belongs to the type IA topoisomerase family. Mg(2+) serves as cofactor.

It carries out the reaction ATP-independent breakage of single-stranded DNA, followed by passage and rejoining.. Releases the supercoiling and torsional tension of DNA, which is introduced during the DNA replication and transcription, by transiently cleaving and rejoining one strand of the DNA duplex. Introduces a single-strand break via transesterification at a target site in duplex DNA. The scissile phosphodiester is attacked by the catalytic tyrosine of the enzyme, resulting in the formation of a DNA-(5'-phosphotyrosyl)-enzyme intermediate and the expulsion of a 3'-OH DNA strand. The free DNA strand then undergoes passage around the unbroken strand, thus removing DNA supercoils. Finally, in the religation step, the DNA 3'-OH attacks the covalent intermediate to expel the active-site tyrosine and restore the DNA phosphodiester backbone. This Staphylococcus haemolyticus (strain JCSC1435) protein is DNA topoisomerase 3.